The following is a 373-amino-acid chain: Histidinol-phosphate aminotransferase (373 aa).

An N6-(pyridoxal phosphate)lysine modification is found at lysine 233.

Belongs to the class-II pyridoxal-phosphate-dependent aminotransferase family. Histidinol-phosphate aminotransferase subfamily. In terms of assembly, homodimer. The cofactor is pyridoxal 5'-phosphate.

The catalysed reaction is L-histidinol phosphate + 2-oxoglutarate = 3-(imidazol-4-yl)-2-oxopropyl phosphate + L-glutamate. The protein operates within amino-acid biosynthesis; L-histidine biosynthesis; L-histidine from 5-phospho-alpha-D-ribose 1-diphosphate: step 7/9. The sequence is that of Histidinol-phosphate aminotransferase from Nitratidesulfovibrio vulgaris (strain DP4) (Desulfovibrio vulgaris).